The primary structure comprises 978 residues: METKGYHSLPEGLDMERRWSQVSQTLERSSLGPAERTNENSYMEIVNVSCVSGATPNNSTQGSSKEKHELLPCLQQDNSRSGILPSDIKTELESKELSATVAESMGLYMDSVRDAEYTYDQQNQQGSLSPAKIYQNMEQLVKFYKENGHRSSTLSAISRPLRSFMPDSGTSMNGGALRAIVKSPIICHEKSPSVCSPLNMPSSVCSPAGINSMSSSTASFGSFPVHSPITQGTSLTCSPSVENRGSRSHSPVHASNVGSPLSSPLSSMKSPISSPPSHCSVKSPVSSPNNVPLRSSVSSPANLNNSRCSVSSPSNTNNRSTLSSPTASTVGSIGSPISNAFSYTTSGASAGAGAIQDMVPSPDTHEKGAHDVPFPKTEEVEKAISNGVTGQLNIVQYIKPEPDGAFSSSCLGGNNKINPSSPFSVPIKQESSKHSCSGASFKGNPTVNPFPFMDGSYFSFMDDKDYYSLSGILGPPVPGFDSSCEGSAFPGGIKQEPDDGSYFPETSIPSSAIIGVNSGGQSFHYRIGAQGTISLSRSPRDQSFQHLSSFPPVNALVESWKPHGDLSSRRSDGYPVLEYIPENVSSSTLRSVSTGSSRPSKICLVCGDEASGCHYGVVTCGSCKVFFKRAVEHNYLCAGRNDCIIDKIRRKNCPACRLQKCLQAGMNLGARKSKKLGKLKGLHEEQPQQPPPPPPQSPEEGTTYIAPTKEPSVNSALVPQLASITRALTPSPSMILENIEPEIVYAGYDNSKPDTAESLLSTLNRLAGKQMIQVVKWAKVLPGFKNLPLEDQITLIQYSWMCLSSFALSWRSYKHTNSQFLYFAPDLVFNEEKMHQSAMYELCQGMRQISLQFVRLQLTFEEYSIMKVLLLLSTVPKDGLKSQAAFEEMRTNYIKELRKMVTKCPNSSGQSWQRFYQLTKLLDSMHDLVNDLLEFCFYTFRESQALKVEFPAMLVEIISDQLPKVESGNAKPLYFHRK.

Residues 1–602 form a modulating region; the sequence is METKGYHSLP…STGSSRPSKI (602 aa). A compositionally biased stretch (polar residues) spans 234 to 243; the sequence is SLTCSPSVEN. Disordered stretches follow at residues 234–331 and 353–372; these read SLTC…STVG and GAIQ…AHDV. Phosphoserine occurs at positions 250, 259, 283, 287, and 299. Positions 259–300 are enriched in low complexity; it reads SPLSSPLSSMKSPISSPPSHCSVKSPVSSPNNVPLRSSVSSP. A compositionally biased stretch (polar residues) spans 301–331; sequence ANLNNSRCSVSSPSNTNNRSTLSSPTASTVG. 8 residues coordinate Zn(2+): Cys603, Cys606, Cys620, Cys623, Cys637, Cys643, Cys653, and Cys656. NR C4-type zinc fingers lie at residues 603 to 623 and 637 to 661; these read CLVC…CGSC and CAGR…LQKC. The segment at residues 603–666 is a DNA-binding region (nuclear receptor); it reads CLVCGDEASG…RLQKCLQAGM (64 aa). Residues 667 to 719 are hinge; the sequence is NLGARKSKKLGKLKGLHEEQPQQPPPPPPQSPEEGTTYIAPTKEPSVNSALVP. Residues 681 to 706 are disordered; sequence GLHEEQPQQPPPPPPQSPEEGTTYIA. The span at 688 to 697 shows a compositional bias: pro residues; the sequence is QQPPPPPPQS. One can recognise an NR LBD domain in the interval 720-958; the sequence is QLASITRALT…EFPAMLVEII (239 aa). The 21-hydroxyprogesterone site is built by Asn764 and Gln770. Aldosterone is bound by residues Asn764 and Gln770. 2 residues coordinate progesterone: Asn764 and Gln770. The important for coactivator binding stretch occupies residues 776–779; the sequence is KWAK. Residues Arg811 and Thr939 each coordinate 21-hydroxyprogesterone. Arg811 and Thr939 together coordinate aldosterone. 2 residues coordinate progesterone: Arg811 and Thr939.

This sequence belongs to the nuclear hormone receptor family. NR3 subfamily. Heteromultimeric cytoplasmic complex with HSP90, HSP70, and FKBP4, in the absence of ligand. After ligand binding, it translocates to the nucleus and binds to DNA as a homodimer and as a heterodimer with NR3C1. Binds the coactivator NCOA2. May interact with HSD11B2 in the absence of ligand. Binds the coactivators NCOA1, TIF1 and NRIP1. Phosphorylated. In terms of tissue distribution, expressed in heart and kidney.

It localises to the cytoplasm. It is found in the nucleus. The protein resides in the endoplasmic reticulum membrane. Its function is as follows. Receptor for both mineralocorticoids (MC) such as aldosterone and glucocorticoids (GC) such as corticosterone or cortisol. Binds to mineralocorticoid response elements (MRE) and transactivates target genes. The effect of MC is to increase ion and water transport and thus raise extracellular fluid volume and blood pressure and lower potassium levels. In Mus musculus (Mouse), this protein is Mineralocorticoid receptor (Nr3c2).